The primary structure comprises 80 residues: Large ribosomal subunit protein uL24 (80 aa).

It belongs to the universal ribosomal protein uL24 family. As to quaternary structure, part of the 50S ribosomal subunit.

Functionally, one of two assembly initiator proteins, it binds directly to the 5'-end of the 23S rRNA, where it nucleates assembly of the 50S subunit. In terms of biological role, one of the proteins that surrounds the polypeptide exit tunnel on the outside of the subunit. The sequence is that of Large ribosomal subunit protein uL24 from Chlorobaculum tepidum (strain ATCC 49652 / DSM 12025 / NBRC 103806 / TLS) (Chlorobium tepidum).